The primary structure comprises 136 residues: Large ribosomal subunit protein uL22 (136 aa).

It belongs to the universal ribosomal protein uL22 family. As to quaternary structure, part of the 50S ribosomal subunit.

This protein binds specifically to 23S rRNA; its binding is stimulated by other ribosomal proteins, e.g. L4, L17, and L20. It is important during the early stages of 50S assembly. It makes multiple contacts with different domains of the 23S rRNA in the assembled 50S subunit and ribosome. Its function is as follows. The globular domain of the protein is located near the polypeptide exit tunnel on the outside of the subunit, while an extended beta-hairpin is found that lines the wall of the exit tunnel in the center of the 70S ribosome. In Bacteroides fragilis (strain YCH46), this protein is Large ribosomal subunit protein uL22.